We begin with the raw amino-acid sequence, 682 residues long: Zinc finger protein 16 (682 aa).

Basic and acidic residues-rich tracts occupy residues 1-10 (MPSLRTRREE) and 113-125 (VSER…EGRR). Disordered regions lie at residues 1–33 (MPSL…HVSD) and 112–134 (DVSE…SQEG). A necessary for transcription activation region spans residues 62 to 210 (YQQPDCDTRT…GVPTAESPLI (149 aa)). A C2H2-type 1; degenerate zinc finger spans residues 209-231 (LICNECGKTFQGNPDLIQCQIVH). Residues 237–259 (FMCDDCGKTFSQNSVLKNHHRSH) form a C2H2-type 2; degenerate zinc finger. K253 participates in a covalent cross-link: Glycyl lysine isopeptide (Lys-Gly) (interchain with G-Cter in SUMO2). 8 C2H2-type zinc fingers span residues 265 to 287 (YQCS…QSHH), 293 to 315 (YMCN…QKSH), 321 to 343 (YECN…QRIH), 349 to 371 (YVCS…HRTH), 377 to 399 (FECG…QRVH), 405 to 427 (YECN…HRVH), 433 to 455 (YKCS…RRIH), and 461 to 483 (HVCN…QIIH). 2 required for nuclear localization regions span residues 268–393 (SECG…AHLR) and 341–373 (RIHS…THTG). A required for nuclear localization region spans residues 473–503 (SSVLRKHQIIHTGEKPYRCSVCGKAFSHSSA). K487 is subject to N6-acetyllysine. 7 consecutive C2H2-type zinc fingers follow at residues 489 to 511 (YRCS…QGVH), 517 to 539 (YACH…QRVH), 545 to 567 (YECT…QRIH), 573 to 595 (HECN…QKVH), 601 to 623 (YTCV…QIIH), 629 to 651 (YKCS…QRIH), and 657 to 679 (YDCA…QLIH).

Belongs to the krueppel C2H2-type zinc-finger protein family. Interacts with INCA1; the interaction inhibits INCA1 activity and induces the cell cycle process.

Its subcellular location is the nucleus. Acts as a transcriptional activator. Promotes cell proliferation by facilitating the cell cycle phase transition from the S to G2/M phase. Involved in both the hemin- and phorbol myristate acetate (PMA)-induced erythroid and megakaryocytic differentiation, respectively. Also plays a role as an inhibitor of cell apoptosis. This is Zinc finger protein 16 (ZNF16) from Gorilla gorilla gorilla (Western lowland gorilla).